A 447-amino-acid chain; its full sequence is Phospholipase A(1) DAD1, chloroplastic (447 aa).

The transit peptide at 1–46 directs the protein to the chloroplast; it reads MRFSLSPVRPHSVVVPSLPKQDVVSYISGTTSNRQCRCVLTLPSPS. Residues 293 to 297 carry the GXSXG motif; sequence GHSLG. The Acyl-ester intermediate role is filled by Ser-295. Catalysis depends on charge relay system residues Asp-352 and His-418.

This sequence belongs to the AB hydrolase superfamily. Lipase family. As to expression, expressed in flower buds, but not in leaves or roots. Restricted to the stamen filaments immediately before flower opening.

It is found in the plastid. It localises to the chloroplast. It carries out the reaction a 1,2-diacyl-sn-glycero-3-phosphocholine + H2O = a 2-acyl-sn-glycero-3-phosphocholine + a fatty acid + H(+). The catalysed reaction is 1-hexadecanoyl-2-(9Z,12Z-octadecadienoyl)-sn-glycero-3-phosphocholine + H2O = 2-(9Z,12Z-octadecadienoyl)-sn-glycero-3-phosphocholine + hexadecanoate + H(+). In terms of biological role, sn-1-specific phospholipase that releases free fatty acids from phospholipids. Low activity on galactolipids and triacylglycerols. Catalyzes the initial step of jasmonic acid biosynthesis. Not essential for jasmonate biosynthesis after wounding or upon pathogen infection. This Arabidopsis thaliana (Mouse-ear cress) protein is Phospholipase A(1) DAD1, chloroplastic.